The chain runs to 268 residues: Tryptophan synthase alpha chain (268 aa).

Catalysis depends on proton acceptor residues glutamate 49 and aspartate 60.

It belongs to the TrpA family. In terms of assembly, tetramer of two alpha and two beta chains.

It catalyses the reaction (1S,2R)-1-C-(indol-3-yl)glycerol 3-phosphate + L-serine = D-glyceraldehyde 3-phosphate + L-tryptophan + H2O. It functions in the pathway amino-acid biosynthesis; L-tryptophan biosynthesis; L-tryptophan from chorismate: step 5/5. Functionally, the alpha subunit is responsible for the aldol cleavage of indoleglycerol phosphate to indole and glyceraldehyde 3-phosphate. The chain is Tryptophan synthase alpha chain from Vibrio parahaemolyticus serotype O3:K6 (strain RIMD 2210633).